Consider the following 382-residue polypeptide: Lipid-A-disaccharide synthase (382 aa).

The protein belongs to the LpxB family.

It catalyses the reaction 2-N,3-O-bis[(3R)-3-hydroxytetradecanoyl]-alpha-D-glucosaminyl 1-phosphate + UDP-2-N,3-O-bis[(3R)-3-hydroxytetradecanoyl]-alpha-D-glucosamine = lipid A disaccharide (E. coli) + UDP + H(+). It carries out the reaction a lipid X + a UDP-2-N,3-O-bis[(3R)-3-hydroxyacyl]-alpha-D-glucosamine = a lipid A disaccharide + UDP + H(+). It functions in the pathway glycolipid biosynthesis; lipid IV(A) biosynthesis; lipid IV(A) from (3R)-3-hydroxytetradecanoyl-[acyl-carrier-protein] and UDP-N-acetyl-alpha-D-glucosamine: step 5/6. In terms of biological role, condensation of UDP-2,3-diacylglucosamine and 2,3-diacylglucosamine-1-phosphate to form lipid A disaccharide, a precursor of lipid A, a phosphorylated glycolipid that anchors the lipopolysaccharide to the outer membrane of the cell. The polypeptide is Lipid-A-disaccharide synthase (Shigella dysenteriae serotype 1 (strain Sd197)).